A 139-amino-acid chain; its full sequence is Endocuticle structural glycoprotein SgAbd-8 (139 aa).

A Pyrrolidone carboxylic acid modification is found at Gln1. An O-linked (HexNAc...) threonine glycan is attached at Thr14. O-linked (HexNAc...) serine glycosylation occurs at Ser15. The Chitin-binding type R&amp;R domain maps to 29-99; that stretch reads DGSYAWSYET…PEGAHLPTPP (71 aa). Thr97 carries an O-linked (HexNAc...) threonine glycan. Residues 111 to 139 are disordered; it reads FIASQPQQPGNNGGGQFPRPQPFPRPGAF. The span at 129-139 shows a compositional bias: pro residues; it reads RPQPFPRPGAF.

Functionally, component of the abdominal endocuticle. In Schistocerca gregaria (Desert locust), this protein is Endocuticle structural glycoprotein SgAbd-8.